The chain runs to 424 residues: GTPase Obg (424 aa).

An Obg domain is found at 1-158 (MFIDTAKIFV…RWIKLELKLL (158 aa)). The 173-residue stretch at 159 to 331 (ADVGLIGFPN…LMKEAARLLS (173 aa)) folds into the OBG-type G domain. GTP is bound by residues 165 to 172 (GFPNVGKS), 190 to 194 (FTTLK), 212 to 215 (DIPG), 282 to 285 (NKSD), and 312 to 314 (SAA). Mg(2+)-binding residues include Ser172 and Thr192. The OCT domain maps to 345 to 424 (RFIEEEKRFT…LNDFEFDFLL (80 aa)).

It belongs to the TRAFAC class OBG-HflX-like GTPase superfamily. OBG GTPase family. As to quaternary structure, monomer. The cofactor is Mg(2+).

The protein resides in the cytoplasm. Functionally, an essential GTPase which binds GTP, GDP and possibly (p)ppGpp with moderate affinity, with high nucleotide exchange rates and a fairly low GTP hydrolysis rate. Plays a role in control of the cell cycle, stress response, ribosome biogenesis and in those bacteria that undergo differentiation, in morphogenesis control. The sequence is that of GTPase Obg from Clostridium botulinum (strain Okra / Type B1).